Reading from the N-terminus, the 364-residue chain is MAMNYSAKDEVDGGPAGPPGGAAKTRRPDNTAFKQQRLPAWQPILTAGTVLPTFFIIGLIFIPIGIGIFVTSNNIREIEIDYTGTEPSSPCNKCLSPNVTSCACTINFTLKQSFEGNVFMYYGLSNFYQNHRRYVKSRDDSQLNGDPSALLNPSKECEPYRRNEDRPIAPCGAIANSMFNDTLELYLVANESDPKPIPIPLKKKGIAWWTDKNVKFRNPPGKESLEEKFKDTIKPVNWHKAVYELDPEDESNNGFINEDFIVWMRTAALPTFRKLYRLIERRDDLHPTLPAGQYFLNITYNYPVHSFDGRKRMILSTISWMGGKNPFLGIAYITIGSISFLLGVVLLVINHKYRNSSNTADITI.

The interval 1 to 28 (MAMNYSAKDEVDGGPAGPPGGAAKTRRP) is disordered. N-acetylalanine is present on Ala-2. Residues 2–49 (AMNYSAKDEVDGGPAGPPGGAAKTRRPDNTAFKQQRLPAWQPILTAGT) are Cytoplasmic-facing. A helical membrane pass occupies residues 50–70 (VLPTFFIIGLIFIPIGIGIFV). Over 71 to 328 (TSNNIREIEI…SWMGGKNPFL (258 aa)) the chain is Exoplasmic loop. 3 disulfide bridges follow: Cys-91–Cys-104, Cys-94–Cys-102, and Cys-157–Cys-171. A glycan (N-linked (GlcNAc...) asparagine) is linked at Asn-98. Asn-297 is a glycosylation site (N-linked (GlcNAc...) asparagine). A helical membrane pass occupies residues 329-349 (GIAYITIGSISFLLGVVLLVI). The Cytoplasmic portion of the chain corresponds to 350–364 (NHKYRNSSNTADITI).

Belongs to the CDC50/LEM3 family. As to quaternary structure, component of various P4-ATPase flippase complexes which consists of a catalytic alpha subunit and an accessory beta subunit. Interacts with ATP8A1 to form a flippase complex; this complex forms an intermediate phosphoenzyme. The ATP8A2:TMEM30A flippase complex has been purified, and ATP8B1:TMEM30A and ATP8B2:TMEM30A flippase complexes have been shown to form intermediate phosphoenzymes in vitro. Interacts with alpha subunits ATP8A1, ATP8B1, ATP8B2, ATP8B4, ATP10A, ATP10B, ATP10D, ATP11A, ATP11B and ATP11C. N-glycosylated. Contains high mannose-type oligosaccharides. Expressed in photoreceptor cells; detected in retina outer segment (at protein level). Detected in hepatocytes liver sinusoidal endothelial cells and kidney brush border of the proximal tubules (at protein level). Expressed in brain (at protein level).

The protein resides in the membrane. The protein localises to the cell membrane. It localises to the golgi apparatus. Its subcellular location is the cytoplasmic vesicle. It is found in the secretory vesicle membrane. The protein resides in the apical cell membrane. In terms of biological role, accessory component of a P4-ATPase flippase complex which catalyzes the hydrolysis of ATP coupled to the transport of aminophospholipids from the outer to the inner leaflet of various membranes and ensures the maintenance of asymmetric distribution of phospholipids. Phospholipid translocation also seems to be implicated in vesicle formation and in uptake of lipid signaling molecules. The beta subunit may assist in binding of the phospholipid substrate. Required for the proper folding, assembly and ER to Golgi exit of the ATP8A2:TMEM30A flippase complex. ATP8A2:TMEM30A may be involved in regulation of neurite outgrowth, and, reconstituted to liposomes, predomiminantly transports phosphatidylserine (PS) and to a lesser extent phosphatidylethanolamine (PE). The ATP8A1:TMEM30A flippase complex seems to play a role in regulation of cell migration probably involving flippase-mediated translocation of phosphatidylethanolamine (PE) at the plasma membrane. Required for the formation of the ATP8A2, ATP8B1 and ATP8B2 P-type ATPAse intermediate phosphoenzymes. Involved in uptake of platelet-activating factor (PAF). Can also mediate the export of alpha subunits ATP8A1, ATP8B1, ATP8B2, ATP8B4, ATP10A, ATP10B, ATP10D, ATP11A, ATP11B and ATP11C from the ER to other membrane localizations. In Mus musculus (Mouse), this protein is Cell cycle control protein 50A.